A 157-amino-acid chain; its full sequence is Small ribosomal subunit protein uS7 (157 aa).

Belongs to the universal ribosomal protein uS7 family. In terms of assembly, part of the 30S ribosomal subunit. Contacts proteins S9 and S11.

One of the primary rRNA binding proteins, it binds directly to 16S rRNA where it nucleates assembly of the head domain of the 30S subunit. Is located at the subunit interface close to the decoding center, probably blocks exit of the E-site tRNA. In Caulobacter sp. (strain K31), this protein is Small ribosomal subunit protein uS7.